Here is a 665-residue protein sequence, read N- to C-terminus: Mitochondrial Rho GTPase 1 (665 aa).

Over 1–634 (MTNDVIRIVV…NQDPEEETNT (634 aa)) the chain is Cytoplasmic. The Miro 1 domain occupies 3-177 (NDVIRIVVCG…FYLCQKAVMH (175 aa)). GTP is bound by residues 12-19 (GDEGVGKS), 61-67 (DTQFSNS), and 119-122 (NVFD). 2 EF-hand domains span residues 193–228 (NAVA…CFGR) and 313–348 (EGYR…TPGI). The Ca(2+) site is built by Asp206, Asp208, Asp210, Tyr212, Glu217, Asp326, Asp328, Asp330, and Glu337. A Miro 2 domain is found at 452 to 618 (RSVFNCFVLG…FIQLAEAAQQ (167 aa)). GTP is bound by residues 461–468 (GSHMSGKT), 498–502 (EMTGG), and 567–570 (LKAD). A helical; Anchor for type IV membrane protein membrane pass occupies residues 635–655 (IMPFALAGGATVLLAAAVAWI). The Mitochondrial intermembrane portion of the chain corresponds to 656–665 (FKNVRVAGRE).

Belongs to the mitochondrial Rho GTPase family.

The protein resides in the mitochondrion outer membrane. Mitochondrial GTPase involved in mitochondrial trafficking. Probably involved in control of anterograde transport of mitochondria and their subcellular distribution. The chain is Mitochondrial Rho GTPase 1 (GEM1) from Yarrowia lipolytica (strain CLIB 122 / E 150) (Yeast).